Here is a 213-residue protein sequence, read N- to C-terminus: Receptor-binding cancer antigen expressed on SiSo cells (213 aa).

At 1–6 the chain is on the extracellular side; the sequence is MAITQF. The helical; Signal-anchor for type III membrane protein transmembrane segment at 7–27 threads the bilayer; the sequence is RLFKFCTCLATVFSFLKRLIC. At 28–213 the chain is on the cytoplasmic side; the sequence is RSGRGRKLSG…EQNKIGVKLS (186 aa). At Ser-36 the chain carries Phosphoserine. Thr-41 is subject to Phosphothreonine. Phosphotyrosine is present on Tyr-94. Positions 163-211 form a coiled coil; that stretch reads EDAAWQAEEVLRQQKLADREKRAAEQQRKKMEKEAQRLMKKEQNKIGVK. A compositionally biased stretch (basic and acidic residues) spans 178 to 206; the sequence is LADREKRAAEQQRKKMEKEAQRLMKKEQN. The interval 178–213 is disordered; that stretch reads LADREKRAAEQQRKKMEKEAQRLMKKEQNKIGVKLS.

Homodimer. In terms of tissue distribution, widely expressed. Expressed in ovary, testis, prostate, thymus, muscle and heart, but not in small intestine, colon, lymph nodes, or peripherical blood lymphocytes. The protein is not detected in any of the above organs.

The protein localises to the golgi apparatus membrane. Functionally, may participate in suppression of cell proliferation and induces apoptotic cell death through activation of interleukin-1-beta converting enzyme (ICE)-like proteases. In Homo sapiens (Human), this protein is Receptor-binding cancer antigen expressed on SiSo cells (EBAG9).